The sequence spans 440 residues: Diaminopimelate decarboxylase (440 aa).

Lys-61 bears the N6-(pyridoxal phosphate)lysine mark. Pyridoxal 5'-phosphate is bound by residues Gly-234 and 275–278; that span reads EPGR. Residues Arg-278, Arg-314, and Tyr-318 each coordinate substrate. Cys-348 acts as the Proton donor in catalysis. Glu-349 and Tyr-384 together coordinate substrate. Pyridoxal 5'-phosphate is bound at residue Tyr-384. Residues 421-431 are compositionally biased toward low complexity; sequence LAPELEPGPAL. The tract at residues 421–440 is disordered; that stretch reads LAPELEPGPALSPRPSRDPR.

This sequence belongs to the Orn/Lys/Arg decarboxylase class-II family. LysA subfamily. As to quaternary structure, homodimer. Pyridoxal 5'-phosphate is required as a cofactor.

The catalysed reaction is meso-2,6-diaminopimelate + H(+) = L-lysine + CO2. Its pathway is amino-acid biosynthesis; L-lysine biosynthesis via DAP pathway; L-lysine from DL-2,6-diaminopimelate: step 1/1. In terms of biological role, specifically catalyzes the decarboxylation of meso-diaminopimelate (meso-DAP) to L-lysine. This is Diaminopimelate decarboxylase from Streptomyces coelicolor (strain ATCC BAA-471 / A3(2) / M145).